The following is a 67-amino-acid chain: Large ribosomal subunit protein bL31 (67 aa).

Residues Cys16, Cys18, Cys36, and Cys39 each contribute to the Zn(2+) site.

This sequence belongs to the bacterial ribosomal protein bL31 family. Type A subfamily. As to quaternary structure, part of the 50S ribosomal subunit. Zn(2+) is required as a cofactor.

In terms of biological role, binds the 23S rRNA. In Desulforudis audaxviator (strain MP104C), this protein is Large ribosomal subunit protein bL31.